We begin with the raw amino-acid sequence, 318 residues long: MATAAAGVAAALSPLSGRDYLSSADCSAEETSAVLDLAAQLKSGDRRIDLGNRVLGLIFTKASTRTRVSFQVAMARLGGQTVDLNPKVTQLGRGEPLEDTARVLSRYCDVLAVRTFAQQELVDYAHWATVPVINALTDLEHPCQSLADFLTMREAHGDLPGQTLAYIGDGNNVAHSLMLCGALLGVNVRIGCPQGFEPLPGVLEQARSLAVQGASIEVIHDPREAVRGAQAVYTDVWASMGQEDEQSEREQAFAGFCVDEALMEAADTEAIVLHCLPAHRGEEISPGVMESSASRIFDQAENRLHAQQALLAALMGGL.

Carbamoyl phosphate contacts are provided by residues Ser63 to Thr66, Gln90, Arg114, and His141 to Gln144. L-ornithine-binding positions include Asn172, Asp235, and Ser239–Met240. Residues Cys275–Leu276 and Arg303 each bind carbamoyl phosphate.

It belongs to the aspartate/ornithine carbamoyltransferase superfamily. OTCase family.

The protein localises to the cytoplasm. It carries out the reaction carbamoyl phosphate + L-ornithine = L-citrulline + phosphate + H(+). Its pathway is amino-acid biosynthesis; L-arginine biosynthesis; L-arginine from L-ornithine and carbamoyl phosphate: step 1/3. Functionally, reversibly catalyzes the transfer of the carbamoyl group from carbamoyl phosphate (CP) to the N(epsilon) atom of ornithine (ORN) to produce L-citrulline. In Parasynechococcus marenigrum (strain WH8102), this protein is Ornithine carbamoyltransferase.